The primary structure comprises 35 residues: Photosystem II reaction center protein M (35 aa).

N-formylmethionine is present on methionine 1. The helical transmembrane segment at 7-28 (GFIASILFVLVPTVFLLILFIQ) threads the bilayer.

Belongs to the PsbM family. As to quaternary structure, PSII is composed of 1 copy each of membrane proteins PsbA, PsbB, PsbC, PsbD, PsbE, PsbF, PsbH, PsbI, PsbJ, PsbK, PsbL, PsbM, PsbT, PsbX, PsbY, PsbZ, Psb30/Ycf12, peripheral proteins PsbO, CyanoQ (PsbQ), PsbU, PsbV and a large number of cofactors. It forms dimeric complexes.

Its subcellular location is the cellular thylakoid membrane. One of the components of the core complex of photosystem II (PSII). PSII is a light-driven water:plastoquinone oxidoreductase that uses light energy to abstract electrons from H(2)O, generating O(2) and a proton gradient subsequently used for ATP formation. It consists of a core antenna complex that captures photons, and an electron transfer chain that converts photonic excitation into a charge separation. This subunit is found at the monomer-monomer interface. Involved in assembly of monomeric PSII from the CP43-less intermediate. This Synechocystis sp. (strain ATCC 27184 / PCC 6803 / Kazusa) protein is Photosystem II reaction center protein M.